Reading from the N-terminus, the 490-residue chain is MSHPALFINGAWQQGRGAEFSKTDPVDNQPLWQANAADGSDVAAACEAARAAFPAWARTPFEQREQLVKRFAALLEEHKSHLAATISRETSKPRWETLTEVQAMIGKVAISLQAYQVRTGVSQTAMADGASVLRHRPHGVLAVFGPYNFPGHLPNGHIVPALLAGNTVVFKPSELTPQTAEETLKLWQQAGLPDGVINMVQGGRETGEALAASTDIDGLLFTGSAGTGYHLHRQLAGQPEKILALEMGGNNALIVDQIEDCDAAVNLAIQSAFISAGQRCTCSRRILVKRGSEGDAFIERLVQVASALRIGRWDAEPQPFMGGVISSAAAEKMLAAQHHLLSLGGKALLTMQRLESGSALLSPGIIDVTGVRDVPDEEYFGPLTTIIRYNDFDEAVRIANQTRYGLSVGLVSPQRERFDHLLLEARAGIVNWNKPLTGASSAAPFGGVGASGNHRPSAYYAADYCAWPMASLESESLTLPASLSPGLSFN.

223–228 (GSAGTG) provides a ligand contact to NAD(+). Residues Glu-246 and Cys-280 contribute to the active site.

This sequence belongs to the aldehyde dehydrogenase family. AstD subfamily.

The enzyme catalyses N-succinyl-L-glutamate 5-semialdehyde + NAD(+) + H2O = N-succinyl-L-glutamate + NADH + 2 H(+). It participates in amino-acid degradation; L-arginine degradation via AST pathway; L-glutamate and succinate from L-arginine: step 4/5. In terms of biological role, catalyzes the NAD-dependent reduction of succinylglutamate semialdehyde into succinylglutamate. This is N-succinylglutamate 5-semialdehyde dehydrogenase from Serratia proteamaculans (strain 568).